The primary structure comprises 574 residues: 2-succinyl-5-enolpyruvyl-6-hydroxy-3-cyclohexene-1-carboxylate synthase (574 aa).

It belongs to the TPP enzyme family. MenD subfamily. Homodimer. Mg(2+) serves as cofactor. Mn(2+) is required as a cofactor. Requires thiamine diphosphate as cofactor.

It carries out the reaction isochorismate + 2-oxoglutarate + H(+) = 5-enolpyruvoyl-6-hydroxy-2-succinyl-cyclohex-3-ene-1-carboxylate + CO2. It participates in quinol/quinone metabolism; 1,4-dihydroxy-2-naphthoate biosynthesis; 1,4-dihydroxy-2-naphthoate from chorismate: step 2/7. The protein operates within quinol/quinone metabolism; menaquinone biosynthesis. Its function is as follows. Catalyzes the thiamine diphosphate-dependent decarboxylation of 2-oxoglutarate and the subsequent addition of the resulting succinic semialdehyde-thiamine pyrophosphate anion to isochorismate to yield 2-succinyl-5-enolpyruvyl-6-hydroxy-3-cyclohexene-1-carboxylate (SEPHCHC). This is 2-succinyl-5-enolpyruvyl-6-hydroxy-3-cyclohexene-1-carboxylate synthase from Vibrio atlanticus (strain LGP32) (Vibrio splendidus (strain Mel32)).